The chain runs to 203 residues: Probable GTP-binding protein EngB (203 aa).

An EngB-type G domain is found at 24-199 (DGSEVAFAGR…HTVIETWLGL (176 aa)). GTP contacts are provided by residues 32–39 (GRSNAGKS), 59–63 (GRTQQ), 77–80 (DLPG), 144–147 (TKAD), and 178–180 (FSS). Serine 39 and threonine 61 together coordinate Mg(2+).

It belongs to the TRAFAC class TrmE-Era-EngA-EngB-Septin-like GTPase superfamily. EngB GTPase family. It depends on Mg(2+) as a cofactor.

Its function is as follows. Necessary for normal cell division and for the maintenance of normal septation. This chain is Probable GTP-binding protein EngB, found in Xylella fastidiosa (strain 9a5c).